The sequence spans 678 residues: Dihydroxyacetone phosphate acyltransferase (678 aa).

A phosphoserine mark is found at serine 12 and serine 17. An HXXXXD motif motif is present at residues 161 to 166 (HRSYID). Residue lysine 641 is modified to N6-acetyllysine. The Microbody targeting signal motif lies at 676–678 (AKL).

This sequence belongs to the GPAT/DAPAT family. In terms of assembly, part of a heterotrimeric complex composed of GNPAT, AGPS and a modified form of GNPAT. In terms of tissue distribution, highly expressed in liver and testis. Lower levels in heart, brain, lung and kidney. Detected in spleen.

The protein resides in the peroxisome membrane. It carries out the reaction dihydroxyacetone phosphate + an acyl-CoA = a 1-acylglycerone 3-phosphate + CoA. The catalysed reaction is dihydroxyacetone phosphate + hexadecanoyl-CoA = 1-hexadecanoylglycerone 3-phosphate + CoA. It participates in membrane lipid metabolism; glycerophospholipid metabolism. Dihydroxyacetonephosphate acyltransferase catalyzing the first step in the biosynthesis of plasmalogens, a subset of phospholipids that differ from other glycerolipids by having an alkyl chain attached through a vinyl ether linkage at the sn-1 position of the glycerol backbone, and which unique physical properties have an impact on various aspects of cell signaling and membrane biology. This chain is Dihydroxyacetone phosphate acyltransferase, found in Mus musculus (Mouse).